A 599-amino-acid polypeptide reads, in one-letter code: Kelch repeat and BTB domain-containing protein 8 (599 aa).

The segment at 1–25 (MAASADLSKSSPTPNGIPSSDTAND) is disordered. The span at 7–25 (LSKSSPTPNGIPSSDTAND) shows a compositional bias: polar residues. The BTB domain maps to 49–117 (TDIVVEVDHG…AYTSRVILTE (69 aa)). In terms of domain architecture, BACK spans 152-254 (SIGVFIFADH…MEDTFIEKIP (103 aa)). 5 Kelch repeats span residues 334–388 (DIYI…YCCG), 389–439 (KMYA…EHKE), 441–479 (IYVLQGEFFLFYEPQKDYWGFLTPMTVPRIQGLAAVYKD), 481–530 (IYYI…LFQN), and 540–586 (QVTV…FECA).

Belongs to the KBTBD8 family. As to quaternary structure, component of the BCR(KBTBD8) E3 ubiquitin ligase complex, at least composed of CUL3, KBTBD8 and RBX1.

Its subcellular location is the cytoplasm. The protein localises to the cytoskeleton. The protein resides in the spindle. It localises to the golgi apparatus. In terms of biological role, substrate-specific adapter of a BCR (BTB-CUL3-RBX1) E3 ubiquitin ligase complex that acts as a regulator of neural crest specification. The BCR(KBTBD8) complex acts by mediating monoubiquitination of NOLC1 and TCOF1: monoubiquitination promotes the formation of a NOLC1-TCOF1 complex that acts as a platform to connect RNA polymerase I with enzymes responsible for ribosomal processing and modification, leading to remodel the translational program of differentiating cells in favor of neural crest specification. The chain is Kelch repeat and BTB domain-containing protein 8 (Kbtbd8) from Mus musculus (Mouse).